The sequence spans 306 residues: Serine/threonine-protein kinase KIN28 (306 aa).

The 284-residue stretch at 7–290 (YTKEKKVGEG…AVQCLESDYF (284 aa)) folds into the Protein kinase domain. ATP contacts are provided by residues 13-21 (VGEGTYAVV) and Lys-36. Asp-129 acts as the Proton acceptor in catalysis. A Phosphothreonine; by CAK modification is found at Thr-162.

The protein belongs to the protein kinase superfamily. CMGC Ser/Thr protein kinase family. CDC2/CDKX subfamily. As to quaternary structure, CCL1 and KIN28 form the TFIIK complex, a component of the TFIIH holo complex. Component of a complex consisting of KIN28, CCL1 and TFB3. Interacts with TFB3. Also interacts with HNT1 and HOG1. Post-translationally, phosphorylation of Thr-162 regulates the affinity of interaction between CCL1, KIN28 and TFB3. Thr-162 phosphorylation does not vary through the cell cycle and is necessary for full kinase activity.

It localises to the nucleus. It carries out the reaction [DNA-directed RNA polymerase] + ATP = phospho-[DNA-directed RNA polymerase] + ADP + H(+). Its function is as follows. Catalytic component of the TFIIK complex (KIN28-CCL1 dimer) which is the protein kinase component of transcription factor IIH (TFIIH) and phosphorylates the C-terminal domain of RNA polymerase II during transition from transcription to elongation after preinitiation complex (PIC) formation, thereby positively regulating transcription. TFIIH (or factor B) is essential for both basal and activated transcription, and is involved in nucleotide excision repair (NER) of damaged DNA. TFIIH has DNA-dependent ATPase activity and is essential for polymerase II transcription in vitro. Essential for cell proliferation. The chain is Serine/threonine-protein kinase KIN28 (KIN28) from Saccharomyces cerevisiae (strain ATCC 204508 / S288c) (Baker's yeast).